A 344-amino-acid polypeptide reads, in one-letter code: uncharacterized protein (344 aa).

Positions 1 to 27 are cleaved as a signal peptide; the sequence is MKKWLIIAVSLAIAIVLFMYTKGEAKA. The region spanning 29–344 is the GH18 domain; it reads GMTVGYTTGD…FWKAIRKGTK (316 aa). Glu140 functions as the Proton donor in the catalytic mechanism.

The protein belongs to the glycosyl hydrolase 18 family.

This is an uncharacterized protein from Bacillus subtilis (strain 168).